The chain runs to 959 residues: Glycine dehydrogenase (decarboxylating) (959 aa).

Lysine 708 carries the post-translational modification N6-(pyridoxal phosphate)lysine.

Belongs to the GcvP family. In terms of assembly, the glycine cleavage system is composed of four proteins: P, T, L and H. Requires pyridoxal 5'-phosphate as cofactor.

The enzyme catalyses N(6)-[(R)-lipoyl]-L-lysyl-[glycine-cleavage complex H protein] + glycine + H(+) = N(6)-[(R)-S(8)-aminomethyldihydrolipoyl]-L-lysyl-[glycine-cleavage complex H protein] + CO2. Its function is as follows. The glycine cleavage system catalyzes the degradation of glycine. The P protein binds the alpha-amino group of glycine through its pyridoxal phosphate cofactor; CO(2) is released and the remaining methylamine moiety is then transferred to the lipoamide cofactor of the H protein. The chain is Glycine dehydrogenase (decarboxylating) from Serratia proteamaculans (strain 568).